Here is a 318-residue protein sequence, read N- to C-terminus: Olfactory receptor 56A1 (318 aa).

At 1–32 the chain is on the extracellular side; sequence MIQPMASPSNSSTVPVSEFLLICFPNFQSWQH. An N-linked (GlcNAc...) asparagine glycan is attached at Asn10. The helical transmembrane segment at 33–53 threads the bilayer; that stretch reads WLSLPLSLLFLLAMGANTTLL. Over 54–61 the chain is Cytoplasmic; the sequence is ITIQLEAS. Residues 62–82 form a helical membrane-spanning segment; sequence LHQPLYYLLSLLSLLDIVLCL. The Extracellular segment spans residues 83-106; that stretch reads TVIPKVLAIFWYDLRSISFPACFL. Cysteines 104 and 196 form a disulfide. Residues 107–127 traverse the membrane as a helical segment; that stretch reads QMFIMNSFLPMESCTFMVMAY. The Cytoplasmic segment spans residues 128-146; the sequence is DRYVAICHPLRYPSIITNQ. Residues 147-167 form a helical membrane-spanning segment; the sequence is FVAKASVFIVVRNALLTAPIP. The Extracellular portion of the chain corresponds to 168 to 203; the sequence is ILTSLLHYCGENVIENCICANLSVSRLSCDNFTLNR. N-linked (GlcNAc...) asparagine glycosylation is found at Asn188 and Asn198. Residues 204 to 224 form a helical membrane-spanning segment; sequence IYQFVAGWTLLGSDLFLIFLS. Residues 225 to 244 are Cytoplasmic-facing; the sequence is YTFILRAVLRFKAEGAAVKA. Residues 245-265 form a helical membrane-spanning segment; it reads LSTCGSHFILILFFSTILLVV. Topologically, residues 266 to 280 are extracellular; it reads VLTNVARKKVPMDIL. The helical transmembrane segment at 281–301 threads the bilayer; the sequence is ILLNVLHHLIPPALNPIVYGV. Residues 302–318 are Cytoplasmic-facing; that stretch reads RTKEIKQGIQKLLQRGR.

It belongs to the G-protein coupled receptor 1 family.

Its subcellular location is the cell membrane. Functionally, odorant receptor. The sequence is that of Olfactory receptor 56A1 (OR56A1) from Homo sapiens (Human).